Here is a 347-residue protein sequence, read N- to C-terminus: DNA primase small subunit PriS (347 aa).

Residues Asp95 and Asp97 contribute to the active site. Residues Cys106, His108, Cys114, and Cys117 each contribute to the Zn(2+) site. The Zinc knuckle motif signature appears at 106 to 117; that stretch reads CNHEPGTVCPIC. The active site involves Asp280.

The protein belongs to the eukaryotic-type primase small subunit family. As to quaternary structure, heterodimer of a small subunit (PriS) and a large subunit (PriL). Both participate in formation of the active center, but the ATP-binding site is exclusively located on the small subunit. Mg(2+) is required as a cofactor. Mn(2+) serves as cofactor.

Functionally, catalytic subunit of DNA primase, an RNA polymerase that catalyzes the synthesis of short RNA molecules used as primers for DNA polymerase during DNA replication. The small subunit contains the primase catalytic core and has DNA synthesis activity on its own. Binding to the large subunit stabilizes and modulates the activity, increasing the rate of DNA synthesis while decreasing the length of the DNA fragments, and conferring RNA synthesis capability. The DNA polymerase activity may enable DNA primase to also catalyze primer extension after primer synthesis. May also play a role in DNA repair. In Pyrococcus furiosus (strain ATCC 43587 / DSM 3638 / JCM 8422 / Vc1), this protein is DNA primase small subunit PriS.